The following is a 171-amino-acid chain: Ribosome maturation factor RimM (171 aa).

Positions 97–170 constitute a PRC barrel domain; it reads EGEYYYHEII…LVTIHVMEGL (74 aa).

It belongs to the RimM family. In terms of assembly, binds ribosomal protein uS19.

The protein localises to the cytoplasm. Functionally, an accessory protein needed during the final step in the assembly of 30S ribosomal subunit, possibly for assembly of the head region. Essential for efficient processing of 16S rRNA. May be needed both before and after RbfA during the maturation of 16S rRNA. It has affinity for free ribosomal 30S subunits but not for 70S ribosomes. The protein is Ribosome maturation factor RimM of Bacillus thuringiensis (strain Al Hakam).